Consider the following 244-residue polypeptide: Ribonuclease HII (244 aa).

Residues 23 to 236 (KIILGLDEAG…SKKLLKEFEE (214 aa)) enclose the RNase H type-2 domain. A divalent metal cation is bound by residues D29, E30, and D130.

It belongs to the RNase HII family. Mn(2+) is required as a cofactor. The cofactor is Mg(2+).

It is found in the cytoplasm. It catalyses the reaction Endonucleolytic cleavage to 5'-phosphomonoester.. Its function is as follows. Endonuclease that specifically degrades the RNA of RNA-DNA hybrids. This chain is Ribonuclease HII, found in Methanococcus vannielii (strain ATCC 35089 / DSM 1224 / JCM 13029 / OCM 148 / SB).